The primary structure comprises 206 residues: Small ribosomal subunit protein uS4 (206 aa).

One can recognise an S4 RNA-binding domain in the interval 96–156 (TRLDNVVYRM…EKSRTQARIK (61 aa)).

Belongs to the universal ribosomal protein uS4 family. As to quaternary structure, part of the 30S ribosomal subunit. Contacts protein S5. The interaction surface between S4 and S5 is involved in control of translational fidelity.

One of the primary rRNA binding proteins, it binds directly to 16S rRNA where it nucleates assembly of the body of the 30S subunit. In terms of biological role, with S5 and S12 plays an important role in translational accuracy. The chain is Small ribosomal subunit protein uS4 from Shewanella baltica (strain OS223).